A 705-amino-acid chain; its full sequence is Choline transporter-like protein 2 (705 aa).

Topologically, residues 1–33 (MGKDSQHYYGKHGTPQKYDPTFKGPIYNRGCTD) are cytoplasmic. Thr14 is subject to Phosphothreonine. The helical transmembrane segment at 34–54 (IICCVLLFLAIVGYVAVGIIA) threads the bilayer. Topologically, residues 55 to 232 (WTHGDPRKVI…QIFEDYTVSW (178 aa)) are extracellular. Asn187 and Asn200 each carry an N-linked (GlcNAc...) asparagine glycan. Residues 233–253 (YWIVIGLVIAMLLSLMFIVLL) form a helical membrane-spanning segment. The Cytoplasmic segment spans residues 254-256 (RFL). Residues 257–277 (AGVMVWVMIVMVILVLGYGIF) form a helical membrane-spanning segment. Residues 278 to 315 (HCYAEYSRLRGEAGSDVSLVDLGFQTDLRVYLHLRQTW) are Extracellular-facing. A helical membrane pass occupies residues 316–336 (MAFMIILSILEVVIILLLIFL). Over 337–364 (RKRILIAIALIKEASRAVGHVMCSMLYP) the chain is Cytoplasmic. Residues 365–385 (LVTFFLLCLCIAYWASTSVFL) form a helical membrane-spanning segment. The Extracellular portion of the chain corresponds to 386 to 453 (STSNVAVYKI…LQIFNAFMFF (68 aa)). An N-linked (GlcNAc...) asparagine glycan is attached at Asn416. The chain crosses the membrane as a helical span at residues 454–476 (WLANFVLALGQVTLAGAFASYYW). The Cytoplasmic portion of the chain corresponds to 477-503 (AMRKPDDMPAFPLFSAFGRALRYHTGS). Residues 504–524 (LAFGSLILAIVQIIRVMLEYL) traverse the membrane as a helical segment. At 525-562 (DQRLKAAQNKFAKFLMVCLKCCFWCLEKFIKFLNRNAY) the chain is on the extracellular side. Residues 563–583 (IMIAIYGTNFCTSARNAFFLL) form a helical membrane-spanning segment. The Cytoplasmic segment spans residues 584-598 (MRNIIRVAVLDKVTD). A helical transmembrane segment spans residues 599–619 (FLFLLGKLLIVGSVGILAFFF). Over 620–637 (FTHRIRIVQDTAPPLNYY) the chain is Extracellular. The helical transmembrane segment at 638 to 658 (WVPILTVIIGSYLIAHGFFSV) threads the bilayer. Residues 659–705 (YGMCVDTLFLCFLEDLERNDGSAERPYFMSSTLKKLLNKTNKKVAES) are Cytoplasmic-facing.

It belongs to the CTL (choline transporter-like) family. Interacts with COCH. N-glycosylated.

Its subcellular location is the cell membrane. The protein localises to the mitochondrion outer membrane. The enzyme catalyses choline(out) + n H(+)(in) = choline(in) + n H(+)(out). It carries out the reaction ethanolamine(out) + n H(+)(in) = ethanolamine(in) + n H(+)(out). In terms of biological role, exhibits choline transporter activity, as choline/H+ antiporter. Also acts as a low-affinity ethanolamine/H+ antiporter, regulating the supply of extracellular ethanolamine (Etn) for the CDP-Etn pathway, redistribute intracellular Etn and balance the CDP-Cho and CDP-Etn arms of the Kennedy pathway. The sequence is that of Choline transporter-like protein 2 (Slc44a2) from Rattus norvegicus (Rat).